A 287-amino-acid polypeptide reads, in one-letter code: uncharacterized protein (287 aa).

The 173-residue stretch at 115 to 287 folds into the ATP-grasp domain; that stretch reads SLLSKETIKS…KKFLKKKLIS (173 aa).

This is an uncharacterized protein from Mycoplasma genitalium (strain ATCC 33530 / DSM 19775 / NCTC 10195 / G37) (Mycoplasmoides genitalium).